The chain runs to 417 residues: Type II methyltransferase M.Eco47II (417 aa).

In terms of domain architecture, SAM-dependent MTase C5-type spans 81–414; that stretch reads YTVLELFAGA…KSVVHLLDKI (334 aa). Cys-153 is a catalytic residue.

This sequence belongs to the class I-like SAM-binding methyltransferase superfamily. C5-methyltransferase family.

It catalyses the reaction a 2'-deoxycytidine in DNA + S-adenosyl-L-methionine = a 5-methyl-2'-deoxycytidine in DNA + S-adenosyl-L-homocysteine + H(+). In terms of biological role, a methylase that recognizes the double-stranded sequence 5'-GGNCC-3', methylates C-? on both strands, and protects the DNA from cleavage by both the Eco47I and Eco47II endonucleases. The sequence is that of Type II methyltransferase M.Eco47II from Escherichia coli.